The primary structure comprises 366 residues: PTI1-like tyrosine-protein kinase 2 (366 aa).

The segment covering 8 to 23 has biased composition (basic and acidic residues); that stretch reads GDKKGDSDLSNEEVHL. The tract at residues 8–50 is disordered; that stretch reads GDKKGDSDLSNEEVHLKSPWQNSEANQKNQKPQAVVKPEAQKE. The segment covering 26-39 has biased composition (polar residues); that stretch reads PWQNSEANQKNQKP. The region spanning 71 to 353 is the Protein kinase domain; it reads FGSKSLIGEG…IVVKALQPLL (283 aa). Residues 77-85 and Lys99 contribute to the ATP site; that span reads IGEGSYGRV. The active-site Proton acceptor is the Asp203.

This sequence belongs to the protein kinase superfamily. Tyr protein kinase family. As to quaternary structure, interacts with OXI1. Autophosphorylated and phosphorylated by OXI1.

The catalysed reaction is L-tyrosyl-[protein] + ATP = O-phospho-L-tyrosyl-[protein] + ADP + H(+). Strongly activated in response to phosphatidic acid (PA) and xylanase in a OXI1- and PDK1-dependent manner, and, to a lesser extent, by hydrogen peroxide and flagellin in a OXI1-dependent manner. Its function is as follows. Probable tyrosine-protein kinase involved in oxidative burst-mediated signaling leading to specific genes expression. This Arabidopsis thaliana (Mouse-ear cress) protein is PTI1-like tyrosine-protein kinase 2 (PTI12).